The sequence spans 185 residues: Large ribosomal subunit protein bL25 (185 aa).

This sequence belongs to the bacterial ribosomal protein bL25 family. CTC subfamily. In terms of assembly, part of the 50S ribosomal subunit; part of the 5S rRNA/L5/L18/L25 subcomplex. Contacts the 5S rRNA. Binds to the 5S rRNA independently of L5 and L18.

In terms of biological role, this is one of the proteins that binds to the 5S RNA in the ribosome where it forms part of the central protuberance. This Laribacter hongkongensis (strain HLHK9) protein is Large ribosomal subunit protein bL25.